The sequence spans 800 residues: Internalin A (800 aa).

Positions Met1–Ala35 are cleaved as a signal peptide. Positions Ala36–Asp76 constitute an LRRNT domain. LRR repeat units lie at residues Gln77–Asn98, Asn99–Thr120, Lys121–Thr142, Asn143–Thr164, Asn165–Thr186, Ser187–Thr207, Thr208–Thr229, Asn230–Thr251, Asn252–Thr273, Asn274–Thr295, Lys296–Thr317, Ala318–Lys339, Asn340–Thr361, Lys362–Thr383, and Asn384–Thr405. One can recognise an LRRCT domain in the interval Ala416–Asp505. Residues Leu518–Gly587 form a B-1 repeat. A 3 X approximate tandem repeats, type B region spans residues Leu518–Asn706. One copy of the B-2 repeat lies at Leu588 to Gly657. One copy of the B-3 repeat lies at Leu658–Asn706. Positions Lys705–Tyr757 are disordered. Over residues Pro711–Thr753 the composition is skewed to low complexity. The LPXTG sorting signal motif lies at Leu767–Gly771. Thr770 carries the post-translational modification Pentaglycyl murein peptidoglycan amidated threonine. Residues Gly771–Lys800 constitute a propeptide, removed by sortase A.

The protein belongs to the internalin family. As to quaternary structure, interacts with host (human) cadherin-1 (CDH1). The formation of the complex between inlA and cadherin-1 is calcium-dependent. Mutagenesis studies show it is possible to increase the affinity of InlA for CDH1 by rational engineering of InlA residues.

The protein localises to the secreted. The protein resides in the cell wall. Bacterial uptake is inhibited by EDTA and by anti-E-cadherin antibodies. In terms of biological role, mediates the entry of L.monocytogenes into host intestinal epithelial cells; transformation with inlA alone allows L.innocua (a non-invasive species) to be taken up by host cells. Binds to human receptor cadherin-1 (E-cadherin, CDH1); the chicken homolog of cadherin-1 but not cadherin-2 function as receptors. Mouse cadherin-1 is not a receptor, however mutating a single surface-exposed residue (Glu-172 to Pro in mouse) allows cadherin-1 to act as a receptor for InlA. This chain is Internalin A, found in Listeria monocytogenes serovar 1/2a (strain ATCC BAA-679 / EGD-e).